Here is a 467-residue protein sequence, read N- to C-terminus: Chromosomal replication initiator protein DnaA (467 aa).

The interval 1 to 90 is domain I, interacts with DnaA modulators; it reads MSLSLWQQCL…KPVTQTPQAA (90 aa). The interval 91–130 is domain II; that stretch reads VTSNVAAPAQVAQTQPQRAAPSTRSGWDNVPAPAEPTYRS. The span at 98–111 shows a compositional bias: low complexity; the sequence is PAQVAQTQPQRAAP. Positions 98–119 are disordered; it reads PAQVAQTQPQRAAPSTRSGWDN. The tract at residues 131-347 is domain III, AAA+ region; that stretch reads NVNVKHTFDN…GALNRVIANA (217 aa). ATP contacts are provided by Gly175, Gly177, Lys178, and Thr179. Positions 348-467 are domain IV, binds dsDNA; it reads NFTGRAITID…FSNLIRTLSS (120 aa).

The protein belongs to the DnaA family. Oligomerizes as a right-handed, spiral filament on DNA at oriC.

Its subcellular location is the cytoplasm. Its function is as follows. Plays an essential role in the initiation and regulation of chromosomal replication. ATP-DnaA binds to the origin of replication (oriC) to initiate formation of the DNA replication initiation complex once per cell cycle. Binds the DnaA box (a 9 base pair repeat at the origin) and separates the double-stranded (ds)DNA. Forms a right-handed helical filament on oriC DNA; dsDNA binds to the exterior of the filament while single-stranded (ss)DNA is stabiized in the filament's interior. The ATP-DnaA-oriC complex binds and stabilizes one strand of the AT-rich DNA unwinding element (DUE), permitting loading of DNA polymerase. After initiation quickly degrades to an ADP-DnaA complex that is not apt for DNA replication. Binds acidic phospholipids. The chain is Chromosomal replication initiator protein DnaA from Shigella boydii serotype 4 (strain Sb227).